Here is a 333-residue protein sequence, read N- to C-terminus: 4-hydroxy-3-methylbut-2-enyl diphosphate reductase (333 aa).

Cys-20 lines the [4Fe-4S] cluster pocket. Residues His-49 and His-85 each coordinate (2E)-4-hydroxy-3-methylbut-2-enyl diphosphate. 2 residues coordinate dimethylallyl diphosphate: His-49 and His-85. Isopentenyl diphosphate contacts are provided by His-49 and His-85. Cys-107 provides a ligand contact to [4Fe-4S] cluster. (2E)-4-hydroxy-3-methylbut-2-enyl diphosphate is bound at residue His-135. His-135 serves as a coordination point for dimethylallyl diphosphate. His-135 provides a ligand contact to isopentenyl diphosphate. Glu-137 functions as the Proton donor in the catalytic mechanism. Thr-176 is a (2E)-4-hydroxy-3-methylbut-2-enyl diphosphate binding site. Position 206 (Cys-206) interacts with [4Fe-4S] cluster. (2E)-4-hydroxy-3-methylbut-2-enyl diphosphate is bound by residues Ser-234, Ser-235, Asn-236, and Ser-279. Residues Ser-234, Ser-235, Asn-236, and Ser-279 each contribute to the dimethylallyl diphosphate site. Isopentenyl diphosphate is bound by residues Ser-234, Ser-235, Asn-236, and Ser-279.

This sequence belongs to the IspH family. Requires [4Fe-4S] cluster as cofactor.

The enzyme catalyses isopentenyl diphosphate + 2 oxidized [2Fe-2S]-[ferredoxin] + H2O = (2E)-4-hydroxy-3-methylbut-2-enyl diphosphate + 2 reduced [2Fe-2S]-[ferredoxin] + 2 H(+). It carries out the reaction dimethylallyl diphosphate + 2 oxidized [2Fe-2S]-[ferredoxin] + H2O = (2E)-4-hydroxy-3-methylbut-2-enyl diphosphate + 2 reduced [2Fe-2S]-[ferredoxin] + 2 H(+). The protein operates within isoprenoid biosynthesis; dimethylallyl diphosphate biosynthesis; dimethylallyl diphosphate from (2E)-4-hydroxy-3-methylbutenyl diphosphate: step 1/1. It functions in the pathway isoprenoid biosynthesis; isopentenyl diphosphate biosynthesis via DXP pathway; isopentenyl diphosphate from 1-deoxy-D-xylulose 5-phosphate: step 6/6. In terms of biological role, catalyzes the conversion of 1-hydroxy-2-methyl-2-(E)-butenyl 4-diphosphate (HMBPP) into a mixture of isopentenyl diphosphate (IPP) and dimethylallyl diphosphate (DMAPP). Acts in the terminal step of the DOXP/MEP pathway for isoprenoid precursor biosynthesis. This is 4-hydroxy-3-methylbut-2-enyl diphosphate reductase from Rhizobium etli (strain CIAT 652).